A 205-amino-acid chain; its full sequence is GTP cyclohydrolase-2 (205 aa).

49 to 53 (RIHSE) contacts GTP. Zn(2+) contacts are provided by Cys54, Cys65, and Cys67. GTP contacts are provided by residues Gln70, 92-94 (EGR), and Thr114. The active-site Proton acceptor is Asp126. Catalysis depends on Arg128, which acts as the Nucleophile. GTP is bound by residues Thr149 and Lys154.

It belongs to the GTP cyclohydrolase II family. Requires Zn(2+) as cofactor.

The catalysed reaction is GTP + 4 H2O = 2,5-diamino-6-hydroxy-4-(5-phosphoribosylamino)-pyrimidine + formate + 2 phosphate + 3 H(+). Its pathway is cofactor biosynthesis; riboflavin biosynthesis; 5-amino-6-(D-ribitylamino)uracil from GTP: step 1/4. Its function is as follows. Catalyzes the conversion of GTP to 2,5-diamino-6-ribosylamino-4(3H)-pyrimidinone 5'-phosphate (DARP), formate and pyrophosphate. In Shewanella amazonensis (strain ATCC BAA-1098 / SB2B), this protein is GTP cyclohydrolase-2.